The primary structure comprises 126 residues: Holo-[acyl-carrier-protein] synthase (126 aa).

Aspartate 8 and glutamate 59 together coordinate Mg(2+).

It belongs to the P-Pant transferase superfamily. AcpS family. It depends on Mg(2+) as a cofactor.

The protein resides in the cytoplasm. The catalysed reaction is apo-[ACP] + CoA = holo-[ACP] + adenosine 3',5'-bisphosphate + H(+). Its function is as follows. Transfers the 4'-phosphopantetheine moiety from coenzyme A to a Ser of acyl-carrier-protein. In Rickettsia prowazekii (strain Madrid E), this protein is Holo-[acyl-carrier-protein] synthase.